The sequence spans 73 residues: Photosystem I reaction center subunit IV (73 aa).

The protein belongs to the PsaE family.

It is found in the cellular thylakoid membrane. Stabilizes the interaction between PsaC and the PSI core, assists the docking of the ferredoxin to PSI and interacts with ferredoxin-NADP oxidoreductase. The sequence is that of Photosystem I reaction center subunit IV from Synechococcus sp. (strain JA-3-3Ab) (Cyanobacteria bacterium Yellowstone A-Prime).